We begin with the raw amino-acid sequence, 357 residues long: Histidine biosynthesis bifunctional protein HisB (357 aa).

A histidinol-phosphatase region spans residues 1-168; sequence MTPILFIDRD…GIAHALADAP (168 aa). Asp-8 serves as the catalytic Nucleophile. Positions 8, 10, and 128 each coordinate Mg(2+). Catalysis depends on Asp-10, which acts as the Proton donor. Residues 169-357 form an imidazoleglycerol-phosphate dehydratase region; it reads RTAVVQRDTK…TALPSTKGAL (189 aa).

In the N-terminal section; belongs to the histidinol-phosphatase family. It in the C-terminal section; belongs to the imidazoleglycerol-phosphate dehydratase family. The cofactor is Mg(2+).

The protein localises to the cytoplasm. It carries out the reaction D-erythro-1-(imidazol-4-yl)glycerol 3-phosphate = 3-(imidazol-4-yl)-2-oxopropyl phosphate + H2O. The catalysed reaction is L-histidinol phosphate + H2O = L-histidinol + phosphate. The protein operates within amino-acid biosynthesis; L-histidine biosynthesis; L-histidine from 5-phospho-alpha-D-ribose 1-diphosphate: step 6/9. It participates in amino-acid biosynthesis; L-histidine biosynthesis; L-histidine from 5-phospho-alpha-D-ribose 1-diphosphate: step 8/9. The sequence is that of Histidine biosynthesis bifunctional protein HisB from Stenotrophomonas maltophilia (strain K279a).